Consider the following 1141-residue polypeptide: Membrane-associated protein gex-3 (1141 aa).

This sequence belongs to the HEM-1/HEM-2 family. In terms of assembly, interacts with aco-1, gei-13 and gex-2. Interacts with gex-3. In terms of tissue distribution, expressed in neurons.

It localises to the cytoplasm. Its function is as follows. Rac effector required for tissue morphogenesis, cell migrations and egg laying. May play a role in egg laying and in yolk protein clatherin-mediated endocytosis by oocytes during oogenesis. Plays a role in the formation of gap junctions between EA and EP endodermal precursor cells in embryos. The polypeptide is Membrane-associated protein gex-3 (Caenorhabditis elegans).